Reading from the N-terminus, the 76-residue chain is Transcription modulator YdgT (76 aa).

The protein belongs to the Hha/YmoA/Cnu family.

In terms of biological role, binds to H-NS and modifies the range of genes it silences; H-NS alone silences 'core' genes while the H-NS-Hha complex (and presumably also H-NS-YdgT) silences genes acquired by horizontal gene transfer. Plays a role silencing virulence factors in the absence of factors that induce pathogenicity. In Salmonella typhimurium (strain SL1344), this protein is Transcription modulator YdgT (ydgT).